Reading from the N-terminus, the 46-residue chain is Sperm protamine P1 (46 aa).

Belongs to the protamine P1 family. Testis.

It is found in the nucleus. Its subcellular location is the chromosome. Functionally, protamines substitute for histones in the chromatin of sperm during the haploid phase of spermatogenesis. They compact sperm DNA into a highly condensed, stable and inactive complex. In Hypsugo savii (Savi's pipistrelle), this protein is Sperm protamine P1 (PRM1).